Reading from the N-terminus, the 201-residue chain is Adenylyl-sulfate kinase (201 aa).

An ATP-binding site is contributed by 35 to 42 (GLSGSGKS). Serine 109 serves as the catalytic Phosphoserine intermediate.

Belongs to the APS kinase family.

It carries out the reaction adenosine 5'-phosphosulfate + ATP = 3'-phosphoadenylyl sulfate + ADP + H(+). The protein operates within sulfur metabolism; hydrogen sulfide biosynthesis; sulfite from sulfate: step 2/3. In terms of biological role, catalyzes the synthesis of activated sulfate. This chain is Adenylyl-sulfate kinase, found in Erwinia tasmaniensis (strain DSM 17950 / CFBP 7177 / CIP 109463 / NCPPB 4357 / Et1/99).